Here is a 156-residue protein sequence, read N- to C-terminus: Transcriptional repressor NrdR (156 aa).

Residues 3–34 fold into a zinc finger; that stretch reads CPKCNSTHSRVVDSRHADEVNAIRRRRECEEC. The region spanning 49 to 139 is the ATP-cone domain; that stretch reads LIVVKKDGTR…VYKEFKDVDQ (91 aa).

Belongs to the NrdR family. The cofactor is Zn(2+).

In terms of biological role, negatively regulates transcription of bacterial ribonucleotide reductase nrd genes and operons by binding to NrdR-boxes. This chain is Transcriptional repressor NrdR, found in Staphylococcus saprophyticus subsp. saprophyticus (strain ATCC 15305 / DSM 20229 / NCIMB 8711 / NCTC 7292 / S-41).